Here is a 42-residue protein sequence, read N- to C-terminus: Delta-hexatoxin-Ar1a (42 aa).

4 cysteine pairs are disulfide-bonded: Cys-1–Cys-15, Cys-8–Cys-20, Cys-14–Cys-31, and Cys-16–Cys-42.

This sequence belongs to the neurotoxin 06 (delta-actx) family. As to expression, expressed by the venom gland.

The protein resides in the secreted. Its function is as follows. Inhibits tetrodotoxin-sensitive voltage-gated sodium channels (Nav) by binding to site 3. It slows the inactivation, causes a prolongation of action potential duration resulting in repetitive firing in autonomic and motor nerve fibers. Does not depolarize the resting potential. Does not affect tetrodotoxin-resistant sodium channels. This lethal neurotoxin is active on both insect and mammalian voltage-gated sodium channels. The protein is Delta-hexatoxin-Ar1a of Atrax robustus (Sydney funnel-web spider).